The sequence spans 366 residues: UPF0324 membrane protein RSc1111 (366 aa).

Transmembrane regions (helical) follow at residues 21-43 (LAGA…TAWA), 103-125 (LGAS…GAWV), 137-159 (AVLV…APAV), 169-191 (AIAS…YALA), 198-220 (VAPA…VIAA), 240-262 (VLAL…LVLE), 283-305 (WFAA…ATWH), and 343-365 (AGVL…RWLA).

This sequence belongs to the UPF0324 family.

The protein localises to the cell membrane. This Ralstonia nicotianae (strain ATCC BAA-1114 / GMI1000) (Ralstonia solanacearum) protein is UPF0324 membrane protein RSc1111.